The sequence spans 371 residues: Cytochrome b (371 aa).

4 consecutive transmembrane segments (helical) span residues 25 to 45, 69 to 90, 105 to 125, and 170 to 190; these read FGSM…FLAI, WIMQ…YIHI, WLSG…GYVL, and FFAL…IHII. 2 residues coordinate heme b: H75 and H89. Residues H174 and H188 each coordinate heme b. H193 serves as a coordination point for a ubiquinone. 4 consecutive transmembrane segments (helical) span residues 218-238, 280-300, 312-332, and 339-358; these read YKDL…LSFS, LGGT…PFTH, LSQT…WTAT, and FITI…IMNP.

It belongs to the cytochrome b family. In terms of assembly, the cytochrome bc1 complex contains 3 respiratory subunits (MT-CYB, CYC1 and UQCRFS1), 2 core proteins (UQCRC1 and UQCRC2) and probably 6 low-molecular weight proteins. Requires heme b as cofactor.

It localises to the mitochondrion inner membrane. In terms of biological role, component of the ubiquinol-cytochrome c reductase complex (complex III or cytochrome b-c1 complex) that is part of the mitochondrial respiratory chain. The b-c1 complex mediates electron transfer from ubiquinol to cytochrome c. Contributes to the generation of a proton gradient across the mitochondrial membrane that is then used for ATP synthesis. This chain is Cytochrome b (MT-CYB), found in Micrurus fulvius (Eastern coral snake).